We begin with the raw amino-acid sequence, 158 residues long: 2-C-methyl-D-erythritol 2,4-cyclodiphosphate synthase (158 aa).

Positions 9 and 11 each coordinate a divalent metal cation. 4-CDP-2-C-methyl-D-erythritol 2-phosphate contacts are provided by residues 9 to 11 (DVH) and 35 to 36 (HS). His-43 is a binding site for a divalent metal cation. 4-CDP-2-C-methyl-D-erythritol 2-phosphate is bound by residues 57–59 (DLG), 62–66 (FPDTD), 133–136 (TTTE), Phe-140, and Arg-143.

The protein belongs to the IspF family. As to quaternary structure, homotrimer. It depends on a divalent metal cation as a cofactor.

It carries out the reaction 4-CDP-2-C-methyl-D-erythritol 2-phosphate = 2-C-methyl-D-erythritol 2,4-cyclic diphosphate + CMP. The protein operates within isoprenoid biosynthesis; isopentenyl diphosphate biosynthesis via DXP pathway; isopentenyl diphosphate from 1-deoxy-D-xylulose 5-phosphate: step 4/6. In terms of biological role, involved in the biosynthesis of isopentenyl diphosphate (IPP) and dimethylallyl diphosphate (DMAPP), two major building blocks of isoprenoid compounds. Catalyzes the conversion of 4-diphosphocytidyl-2-C-methyl-D-erythritol 2-phosphate (CDP-ME2P) to 2-C-methyl-D-erythritol 2,4-cyclodiphosphate (ME-CPP) with a corresponding release of cytidine 5-monophosphate (CMP). This is 2-C-methyl-D-erythritol 2,4-cyclodiphosphate synthase from Desulfitobacterium hafniense (strain DSM 10664 / DCB-2).